Here is a 691-residue protein sequence, read N- to C-terminus: MARSPVEPPASQPAKRAAWLRAELERANYAYYVLDQPDLPDAEYDRLFVELQRIEAEHPDLVTPDSPTQRVGGEAASGFTPVVHDKPMLSLNNGFADEDVIAFDKRVADGLDKATDLAGTVTEPVEYACELKFDGLAISLRYENGRFVQASTRGDGTTGEDVTENIRTIRAIPLTLKGKRIPRMLDVRGEVLMFKRDFARLNERQRAAGQREFANPRNAAAGSLRQLDSKITASRPLSFFAYGIGVLDGADMPDTHSGLLDWYETLGLPVNRERAVVRGAAGLLAFFHSVGERRESLPYDIDGVVYKVNRRDEQDRLGFVSRAPRFALAHKFPAQEALTKLIAIDVQVGRTGAITPVARLEPVFVGGATVTNATLHNEDEVRRKDIRIGDTVIVRRAGDVIPEVVSAVLDRRPADAQEFVMPTECPECGSRIERLPDEAIARCTGGLFCPAQRKQALWHFAQRRALDIDGLGEKIIDQLVEQNLVRTPADLFNLGFSTLVALDRFAEKSARNLIDSLEKAKHTTLARFIYALGIRHVGESTAKDLAKHFGSLDPIMDAPIDALLEVNDVGPIVAESIHQFFAEEHNRTVIEQLRARGKVTWPEGPPAPRAPQGVLAGKTVVLTGTLPTLTREAAKEMLEAAGAKVAGSVSKKTDYVVAGADAGSKLAKAEELGIPVLDEAGMHTLLEGHAR.

NAD(+)-binding positions include 41 to 45 (DAEYD), 90 to 91 (SL), and Glu-130. Lys-132 serves as the catalytic N6-AMP-lysine intermediate. NAD(+) is bound by residues Arg-153, Glu-190, Lys-307, and Lys-331. Zn(2+) is bound by residues Cys-425, Cys-428, Cys-443, and Cys-449. The BRCT domain maps to 610–691 (APQGVLAGKT…MHTLLEGHAR (82 aa)).

Belongs to the NAD-dependent DNA ligase family. LigA subfamily. Mg(2+) serves as cofactor. Requires Mn(2+) as cofactor.

It catalyses the reaction NAD(+) + (deoxyribonucleotide)n-3'-hydroxyl + 5'-phospho-(deoxyribonucleotide)m = (deoxyribonucleotide)n+m + AMP + beta-nicotinamide D-nucleotide.. Functionally, DNA ligase that catalyzes the formation of phosphodiester linkages between 5'-phosphoryl and 3'-hydroxyl groups in double-stranded DNA using NAD as a coenzyme and as the energy source for the reaction. It is essential for DNA replication and repair of damaged DNA. This Burkholderia pseudomallei (strain 1106a) protein is DNA ligase.